Consider the following 1061-residue polypeptide: E3 SUMO-protein ligase ZNF451 (1061 aa).

Residues 1–38 (MGDPGSEIIESVPPAGPEASESTTDENEDDIQFVSEGP) form a disordered region. Residues 1–246 (MGDPGSEIIE…TDDGHNNNLL (246 aa)) form a sufficient for E3 SUMO-protein ligase activity region. The tract at residues 1 to 344 (MGDPGSEIIE…RVHCRNAGPV (344 aa)) is important for interaction with SUMO1 and SUMO2. Residues 30–37 (DIQFVSEG) form an interaction with SUMO2 1 region. Positions 38 to 41 (PLRP) match the PLRP motif. The interval 42 to 50 (VLEYIDLVS) is interaction with SUMO2 2. Glycyl lysine isopeptide (Lys-Gly) (interchain with G-Cter in SUMO2) cross-links involve residues Lys75, Lys77, Lys106, Ile121, Ala130, Leu138, Lys139, Lys144, and Lys153. Ser155 bears the Phosphoserine mark. Position 158 is an omega-N-methylarginine (Arg158). Residues Val164 and Lys167 each participate in a glycyl lysine isopeptide (Lys-Gly) (interchain with G-Cter in SUMO2) cross-link. Positions 168–525 (PILCPIMHCN…HMSRIHGGAH (358 aa)) are important for interaction with SMAD4. A C2H2-type 1 zinc finger spans residues 169–195 (ILCPIMHCNKEFDNGHLLLGHLKRFDH). Glycyl lysine isopeptide (Lys-Gly) (interchain with G-Cter in SUMO2) cross-links involve residues Gln226, Gly240, Pro247, Ser263, Lys270, Lys275, Lys283, Asp286, Lys288, Pro293, Lys301, and Lys309. The C2H2-type 2 zinc-finger motif lies at 253–277 (FACPNCFLLFSRKEECSKHMSGKNH). Residues 315-337 (VKCVACHKTLRSHMELTAHFRVH) form a C2H2-type 3 zinc finger. A Glycyl lysine isopeptide (Lys-Gly) (interchain with G-Cter in SUMO2) cross-link involves residue Lys357. A C2H2-type 4 zinc finger spans residues 362–386 (GYCPDCNQVFVDETSTQNHKQNSGH). Residue Lys423 forms a Glycyl lysine isopeptide (Lys-Gly) (interchain with G-Cter in SUMO2) linkage. Ser432 is modified (phosphoserine). Glycyl lysine isopeptide (Lys-Gly) (interchain with G-Cter in SUMO2) cross-links involve residues Lys434, Lys446, Lys452, Lys454, Lys464, Phe473, Val490, Cys500, Lys505, Asp508, Gly522, Trp532, Lys543, and Lys585. Residues 498-521 (YKCVVCGKVCDDSGVIRLHMSRIH) form a C2H2-type 5 zinc finger. Residues 531 to 554 (FWCRTCKKELTRKDTIMAHVTEFH) form a C2H2-type 6 zinc finger. A C2H2-type 7; atypical zinc finger spans residues 606 to 631 (WQCRICEDMFDSQEYVKQHCMSLASH). Glycyl lysine isopeptide (Lys-Gly) (interchain with G-Cter in SUMO2) cross-links involve residues Lys632, Lys647, and Lys664. A C2H2-type 8 zinc finger spans residues 636 to 659 (YSCAHCRKPFHKIETLYRHCQDEH). The segment at 667-690 (YFCGLCDLIFNVEEAFLSHYEEHH) adopts a C2H2-type 9 zinc-finger fold. Lys706 participates in a covalent cross-link: Glycyl lysine isopeptide (Lys-Gly) (interchain with G-Cter in SUMO1); alternate. A Glycyl lysine isopeptide (Lys-Gly) (interchain with G-Cter in SUMO2); alternate cross-link involves residue Lys706. Glycyl lysine isopeptide (Lys-Gly) (interchain with G-Cter in SUMO2) cross-links involve residues Lys731 and Lys748. A C2H2-type 10 zinc finger spans residues 753 to 776 (FRCSLCSATAQNLTDMNTHIHQVH). Glycyl lysine isopeptide (Lys-Gly) (interchain with G-Cter in SUMO2) cross-links involve residues Lys777, Lys779, Lys790, Lys817, Lys827, Lys832, Lys843, Lys845, Lys852, Lys951, Lys992, and Lys993. The C2H2-type 11 zinc-finger motif lies at 789 to 812 (IKCGTCTKAFHDPESAQQHFHRKH). The important for ubiquitin binding stretch occupies residues 1050 to 1061 (LEEAIRRSLEEM).

Belongs to the krueppel C2H2-type zinc-finger protein family. In terms of assembly, homooligomer. Interacts (via N-terminal region) with SUMO1. Interacts (via N-terminal region) with SUMO2. Interacts simultaneously with two SUMO2 chains. Identified in a complex with SUMO2 and UBE2I/UBC9, where one ZNF451 interacts with one UBE2I/UBC9 and two SUMO2 chains, one bound to the UBE2I/UBC9 active site and the other to another region of the same UBE2I/UBC9 molecule. Interacts (via C-terminus) with ubiquitin. Interacts (via N-terminal zinc-finger domains) with SMAD4 (via MH2 domain). Interacts with SMAD2 and SMAD3. Identified in a complex that contains at least ZNF451, SMAD2, SMAD3 and SMAD4. Interacts with EP300. Inhibits interaction between EP300 and the SMAD4 complex. Interacts with SIMC1. Sumoylated. Predominantly sumoylated on the N-terminal region that is important for interaction with SUMO1 and SUMO2. Sumoylation is important for localization in nuclear granules; desumoylation leads to diffuse nucleoplasmic location. Autosumoylated (in vitro). Sumoylation enhances E3 SUMO-protein ligase activity.

It localises to the nucleus. The protein resides in the PML body. The protein localises to the nucleoplasm. It participates in protein modification; protein sumoylation. Functionally, E3 SUMO-protein ligase; has a preference for SUMO2 and SUMO3 and facilitates UBE2I/UBC9-mediated sumoylation of target proteins. Plays a role in protein SUMO2 modification in response to stress caused by DNA damage and by proteasome inhibitors (in vitro). Required for MCM4 sumoylation. Has no activity with SUMO1. Preferentially transfers an additional SUMO2 chain onto the SUMO2 consensus site 'Lys-11'. Negatively regulates transcriptional activation mediated by the SMAD4 complex in response to TGF-beta signaling. Inhibits EP300-mediated acetylation of histone H3 at 'Lys-9'. Plays a role in regulating the transcription of AR targets. This Homo sapiens (Human) protein is E3 SUMO-protein ligase ZNF451 (ZNF451).